Consider the following 154-residue polypeptide: Large ribosomal subunit protein uL30 (154 aa).

This sequence belongs to the universal ribosomal protein uL30 family. As to quaternary structure, part of the 50S ribosomal subunit.

The sequence is that of Large ribosomal subunit protein uL30 from Methanococcus vannielii.